Consider the following 528-residue polypeptide: Protein MGF 505-7R (528 aa).

ANK repeat units follow at residues 129 to 158, 261 to 290, and 292 to 322; these read ECDL…LLNV, HVNR…VPHK, and IERM…KVKN.

This sequence belongs to the asfivirus MGF 505 family. As to quaternary structure, interacts with host STING1. Interacts with host JAK1; this interaction leads to JAK1 degradation. Interacts with host JAK2; this interaction leads to JAK2 degradation. Interacts with host RELA; this interaction inhibits NF-kappa-B promoter activity.

It localises to the host cytoplasm. Its function is as follows. Plays a role in virus cell tropism, and may be required for efficient virus replication in macrophages. Interferes with host NF-kappa-B promoter activity mediated by TLR8. Mechanistically, inhibits the phosphorylation and subsequent nuclear translocation of host NF-kappa-B RELA subunit downstream of TLR8. Promotes the expression of the autophagy-related protein host ULK1 to degrade host STING and inhibit the interferon response. Also inhibits JAK1- and JAK2-mediated signaling and thus negatively regulates the IFN-gamma signaling. This is Protein MGF 505-7R from Ornithodoros (relapsing fever ticks).